A 269-amino-acid polypeptide reads, in one-letter code: Interleukin-1 beta (269 aa).

The propeptide occupies 1 to 117 (MATVPELNCE…DDDDNLLVCD (117 aa)).

It belongs to the IL-1 family. In terms of assembly, monomer. Interacts with MEFV. Interacts with integrins ITGAV:ITGBV and ITGA5:ITGB1; integrin-binding is required for IL1B signaling. Interacts with cargo receptor TMED10; the interaction is direct and is required for the secretion of IL1B mature form. Interacts with HSP90AB1; the interaction facilitates cargo translocation into the ERGIC. Interacts with HSP90B1; the interaction facilitates cargo translocation into the ERGIC. Expressed in activated macrophages (at protein level).

It is found in the cytoplasm. Its subcellular location is the cytosol. The protein localises to the secreted. The protein resides in the lysosome. It localises to the extracellular exosome. Potent pro-inflammatory cytokine. Initially discovered as the major endogenous pyrogen, induces prostaglandin synthesis, neutrophil influx and activation, T-cell activation and cytokine production, B-cell activation and antibody production, and fibroblast proliferation and collagen production. Promotes Th17 differentiation of T-cells. Synergizes with IL12/interleukin-12 to induce IFNG synthesis from T-helper 1 (Th1) cells. Plays a role in angiogenesis by inducing VEGF production synergistically with TNF and IL6. Involved in transduction of inflammation downstream of pyroptosis: its mature form is specifically released in the extracellular milieu by passing through the gasdermin-D (GSDMD) pore. The sequence is that of Interleukin-1 beta (Il1b) from Mus musculus (Mouse).